The sequence spans 135 residues: Protein E6 (135 aa).

Zinc fingers lie at residues 23–59 and 96–132; these read CTFCSRFLTQEELTAFDFSAFNLVWRGRCAHGICTAC and CRVCMKILSVTEKLECAERGESFAKVRGQWRARCRIC.

This sequence belongs to the papillomaviridae E6 protein family. Forms homodimers. Interacts with ubiquitin-protein ligase UBE3A/E6-AP; this interaction stimulates UBE3A ubiquitin activity. Interacts with host BAK1.

Its subcellular location is the host cytoplasm. The protein resides in the host nucleus. Plays a major role in the induction and maintenance of cellular transformation. E6 associates with host UBE3A/E6-AP ubiquitin-protein ligase and modulates its activity. Protects host keratinocytes from apoptosis by mediating the degradation of host BAK1. May also inhibit host immune response. This is Protein E6 from Mastomys natalensis papillomavirus (isolate African multimammate rat) (MnPV).